Here is a 314-residue protein sequence, read N- to C-terminus: Ketimine reductase mu-crystallin (314 aa).

Arginine 47 serves as a coordination point for 3,3',5-triiodo-L-thyronine. NADPH is bound by residues serine 91, histidine 92, arginine 119, alanine 144, valine 146, glutamine 147, asparagine 168, arginine 169, threonine 170, asparagine 173, threonine 205, and methionine 206. Glutamate 257 contacts 3,3',5-triiodo-L-thyronine. NADPH is bound at residue serine 292.

The protein belongs to the ornithine cyclodeaminase/mu-crystallin family. In terms of assembly, homodimer. Binds the thyroid hormone triiodothyronine (T3); T3 binding inhibits enzymatic activity.

It localises to the cytoplasm. The catalysed reaction is L-pipecolate + NAD(+) = Delta(1)-piperideine-2-carboxylate + NADH + H(+). The enzyme catalyses L-pipecolate + NADP(+) = Delta(1)-piperideine-2-carboxylate + NADPH + H(+). It catalyses the reaction L-proline + NADP(+) = 1-pyrroline-2-carboxylate + NADPH + H(+). It carries out the reaction L-proline + NAD(+) = 1-pyrroline-2-carboxylate + NADH + H(+). The catalysed reaction is (3R)-1,4-thiomorpholine-3-carboxylate + NAD(+) = 3,4-dehydrothiomorpholine-3-carboxylate + NADH + 2 H(+). The enzyme catalyses (3R)-1,4-thiomorpholine-3-carboxylate + NADP(+) = 3,4-dehydrothiomorpholine-3-carboxylate + NADPH + 2 H(+). It catalyses the reaction (S)-cystathionine ketimine + NADH + 2 H(+) = (3R,5S)-2,3,5,6,7-pentahydro-1,4-thiazepine-3,5-dicarboxylate + NAD(+). It carries out the reaction (S)-cystathionine ketimine + NADPH + 2 H(+) = (3R,5S)-2,3,5,6,7-pentahydro-1,4-thiazepine-3,5-dicarboxylate + NADP(+). The catalysed reaction is (R)-lanthionine ketimine + NADPH + 2 H(+) = (3R,5R)-1,4-thiomorpholine-3,5-dicarboxylate + NADP(+). The enzyme catalyses Delta(2)-thiazoline-2-carboxylate + NADPH + 2 H(+) = L-thiazolidine-2-carboxylate + NADP(+). Functionally, catalyzes the NAD(P)H-dependent reduction of imine double bonds of a number of cyclic ketimine substrates, including sulfur-containing cyclic ketimines. Under physiological conditions, it efficiently catalyzes delta(1)-piperideine-2-carboxylate (P2C) and delta(1)-pyrroline-2-carboxylate (Pyr2C) reduction, suggesting a central role in lysine and glutamate metabolism. Additional substrates are (S)-cystathionine ketimine (CysK), 3,4-dehydrothiomorpholine-3-carboxylate (AECK), and (R)-lanthionine ketimine (LK) that is reduced at very low rate compared to other substrates. Also catalyzes the NAD(P)H-dependent reduction of delta(2)-thiazoline-2-carboxylate (T2C). The protein is Ketimine reductase mu-crystallin (CRYM) of Bos taurus (Bovine).